A 481-amino-acid polypeptide reads, in one-letter code: DNA primase DnaG (481 aa).

A Toprim domain is found at 169–243 (DAILVVEGRA…DVDYVARAPD (75 aa)). Positions 175, 217, and 219 each coordinate Mg(2+). The disordered stretch occupies residues 275-393 (RRRNKLAAQA…ARKEREPSEF (119 aa)). The segment covering 281–309 (AAQAAEKQAQAEAAQKAEAPAAAAPVQPQ) has biased composition (low complexity). The span at 312–393 (YQQKEYPQRE…ARKEREPSEF (82 aa)) shows a compositional bias: basic and acidic residues.

The protein belongs to the archaeal DnaG primase family. In terms of assembly, forms a ternary complex with MCM helicase and DNA. Component of the archaeal exosome complex. The cofactor is Mg(2+).

The catalysed reaction is ssDNA + n NTP = ssDNA/pppN(pN)n-1 hybrid + (n-1) diphosphate.. Functionally, RNA polymerase that catalyzes the synthesis of short RNA molecules used as primers for DNA polymerase during DNA replication. Also part of the exosome, which is a complex involved in RNA degradation. Acts as a poly(A)-binding protein that enhances the interaction between heteromeric, adenine-rich transcripts and the exosome. This is DNA primase DnaG from Methanocella arvoryzae (strain DSM 22066 / NBRC 105507 / MRE50).